A 337-amino-acid chain; its full sequence is 2-oxoglutarate-dependent dioxygenase frbA (337 aa).

In terms of domain architecture, Fe2OG dioxygenase spans 175-290 (CSAELRLNHY…RHSLAYFGKP (116 aa)). Fe cation-binding residues include His202, Asp204, and His262. A 2-oxoglutarate-binding site is contributed by Arg281.

It belongs to the iron/ascorbate-dependent oxidoreductase family. Fe(2+) serves as cofactor.

It participates in antifungal biosynthesis. 2-oxoglutarate-dependent dioxygenase; part of the gene cluster that mediates the biosynthesis of the antifungal antibiotic FR901469, an inhibitor of beta-1,3-glucansynthase, exerting antifungal activity against the pathogenes Candida albicans and Aspergillus fumigatus. FR901469 is a cyclic depsipeptide containing 12 amino acid residues and a fatty acid chain. The NRPS frbI contains 12 modules responsible for the formation of the depsipeptide backbone which is denoted as Acyl-Thr-Ala-Tyr-Val-4OHPro-Thr-Thr-3OHPro-threo3OHGln-Gly-Thr-Orn-OH (C71H116N14O23). The PKS frbB is probably involved in the production of the hydrocarbon chain, and the acyl-CoA ligase frbC might be involved in the transport of the chain to the peptide ptoduct of frbI. Because FR901469 contains 3 hydroxylated amino acid residues, the 3 oxygenases frbA, frbH, and frbJ might be participating in amino acid hydroxylation. As no thioesterase domains were detected in frbI or frbB, the thioesterases frbD and frbE may instead release and cyclize the products of the NRPS and PKS, respectively. This is 2-oxoglutarate-dependent dioxygenase frbA from Dothideomycetidae sp. (strain 11243) (Fungal sp. (strain No.11243)).